Reading from the N-terminus, the 627-residue chain is Coiled-coil domain-containing protein 22 (627 aa).

The tract at residues 1-321 is sufficient for interaction with COMMD1; sequence MEEADRILIH…VSDVPATSRR (321 aa). Positions 1 to 447 are sufficicient and required for interaction with CCDC93; that stretch reads MEEADRILIH…LQDCRELESS (447 aa). Residues 218–243 form a disordered region; that stretch reads TGRDRPGDEDWVHRTSRLPPQEDTRA. Over residues 219 to 230 the composition is skewed to basic and acidic residues; that stretch reads GRDRPGDEDWVH. A coiled-coil region spans residues 320–627; the sequence is RRPEQVTWAA…AGLLGRVREA (308 aa). Ser-410 is modified (phosphoserine).

It belongs to the CCDC22 family. In terms of assembly, component of the commander complex consisting of the CCC subcomplex and the retriever subcomplex. Component of the CCC (COMMD/CCDC22/CCDC93) subcomplex consisting of COMMD1, COMMD2, COMMD3, COMMD4, COMMD5, COMMD6, COMMD7, COMMD8, COMMD9, COMMD10, CCDC22 and CCDC93. Forms a coiled-coil heterodimer with CCDC22; this heterodimer interacts with the guanine nucleotide exchange factor DENND10; the interaction is direct. Interacts with CUL1, CUL2, CUL3, SKP1, BTRC. Interacts with SNX17 and SNX31. Interacts with CPNE1 and CPNE4. Widely expressed in adult tissues and in fetal liver and brain, with highest levels in prostate and lowest in skeletal muscle.

Its subcellular location is the endosome. The protein resides in the cytoplasm. It is found in the cytoskeleton. It localises to the microtubule organizing center. The protein localises to the centrosome. Its function is as follows. Component of the commander complex that is essential for endosomal recycling of transmembrane cargos; the Commander complex is composed of composed of the CCC subcomplex and the retriever subcomplex. Component of the CCC complex, which is involved in the regulation of endosomal recycling of surface proteins, including integrins, signaling receptor and channels. Involved in regulation of NF-kappa-B signaling. Promotes ubiquitination of I-kappa-B-kinase subunit IKBKB and its subsequent proteasomal degradation leading to NF-kappa-B activation; the function may involve association with COMMD8 and a CUL1-dependent E3 ubiquitin ligase complex. May down-regulate NF-kappa-B activity via association with COMMD1 and involving a CUL2-dependent E3 ubiquitin ligase complex. Regulates the cellular localization of COMM domain-containing proteins, such as COMMD1 and COMMD10. Component of the CCC complex, which is involved in the regulation of endosomal recycling of surface proteins, including integrins, signaling receptor and channels. The CCC complex associates with SNX17, retriever and WASH complexes to prevent lysosomal degradation and promote cell surface recycling of numerous cargos such as integrins ITGA5:ITGB1. Plays a role in copper ion homeostasis. Involved in copper-dependent ATP7A trafficking between the trans-Golgi network and vesicles in the cell periphery; the function is proposed to depend on its association within the CCC complex and cooperation with the WASH complex on early endosomes. Functionally, (Microbial infection) The CCC complex, in collaboration with the heterotrimeric retriever complex, mediates the exit of human papillomavirus to the cell surface. This Homo sapiens (Human) protein is Coiled-coil domain-containing protein 22 (CCDC22).